The sequence spans 221 residues: Sentrin-specific protease 8 (221 aa).

M1 carries the post-translational modification N-acetylmethionine. The protease stretch occupies residues 11–174 (SLLRQSDVSL…MYVICNTEAL (164 aa)). Active-site residues include H102 and D119. C163 (nucleophile) is an active-site residue.

It belongs to the peptidase C48 family.

In terms of biological role, protease that catalyzes two essential functions in the NEDD8 pathway: processing of full-length NEDD8 to its mature form and deconjugation of NEDD8 from targeted proteins such as cullins or p53. This is Sentrin-specific protease 8 (Senp8) from Mus musculus (Mouse).